We begin with the raw amino-acid sequence, 504 residues long: Glycerol kinase (504 aa).

An ADP-binding site is contributed by threonine 14. 3 residues coordinate ATP: threonine 14, threonine 15, and serine 16. Threonine 14 lines the sn-glycerol 3-phosphate pocket. An ADP-binding site is contributed by arginine 18. Positions 84, 85, 136, and 246 each coordinate sn-glycerol 3-phosphate. Residues arginine 84, glutamate 85, tyrosine 136, aspartate 246, and glutamine 247 each contribute to the glycerol site. ADP-binding residues include threonine 268 and glycine 311. Threonine 268, glycine 311, glutamine 315, and glycine 412 together coordinate ATP. ADP contacts are provided by glycine 412 and asparagine 416.

Belongs to the FGGY kinase family.

The catalysed reaction is glycerol + ATP = sn-glycerol 3-phosphate + ADP + H(+). It participates in polyol metabolism; glycerol degradation via glycerol kinase pathway; sn-glycerol 3-phosphate from glycerol: step 1/1. Inhibited by fructose 1,6-bisphosphate (FBP). In terms of biological role, key enzyme in the regulation of glycerol uptake and metabolism. Catalyzes the phosphorylation of glycerol to yield sn-glycerol 3-phosphate. This is Glycerol kinase from Aliivibrio fischeri (strain MJ11) (Vibrio fischeri).